The primary structure comprises 156 residues: Low molecular weight protein-tyrosine-phosphatase YfkJ (156 aa).

The Nucleophile role is filled by cysteine 8. Residue arginine 14 is part of the active site. The Proton donor role is filled by aspartate 125.

Belongs to the low molecular weight phosphotyrosine protein phosphatase family.

The enzyme catalyses O-phospho-L-tyrosyl-[protein] + H2O = L-tyrosyl-[protein] + phosphate. Its activity is regulated as follows. Efficiently inhibited by Cu(2+) ion, Zn(2+) ion and N-ethylmaleimide, while the addition of Mg(2+), Ca(2+) or Fe(3+) ions has minimal effect. Inhibited in a competitive manner by vanadate. Dephosphorylates the phosphotyrosine-containing proteins. Involved in ethanol stress resistance. The chain is Low molecular weight protein-tyrosine-phosphatase YfkJ (yfkJ) from Bacillus subtilis (strain 168).